Consider the following 467-residue polypeptide: Glutamate--tRNA ligase (467 aa).

The short motif at 9 to 19 (PSPTGFLHIGG) is the 'HIGH' region element. A 'KMSKS' region motif is present at residues 250–254 (KLSKR). K253 contributes to the ATP binding site.

This sequence belongs to the class-I aminoacyl-tRNA synthetase family. Glutamate--tRNA ligase type 1 subfamily. In terms of assembly, monomer.

It localises to the cytoplasm. It carries out the reaction tRNA(Glu) + L-glutamate + ATP = L-glutamyl-tRNA(Glu) + AMP + diphosphate. Functionally, catalyzes the attachment of glutamate to tRNA(Glu) in a two-step reaction: glutamate is first activated by ATP to form Glu-AMP and then transferred to the acceptor end of tRNA(Glu). This chain is Glutamate--tRNA ligase, found in Mesomycoplasma hyopneumoniae (strain 232) (Mycoplasma hyopneumoniae).